Here is a 439-residue protein sequence, read N- to C-terminus: UDP-N-acetylmuramate--L-alanine ligase (439 aa).

Position 113–119 (113–119) interacts with ATP; sequence GSHGKTS.

It belongs to the MurCDEF family.

The protein resides in the cytoplasm. The enzyme catalyses UDP-N-acetyl-alpha-D-muramate + L-alanine + ATP = UDP-N-acetyl-alpha-D-muramoyl-L-alanine + ADP + phosphate + H(+). It participates in cell wall biogenesis; peptidoglycan biosynthesis. Cell wall formation. This chain is UDP-N-acetylmuramate--L-alanine ligase, found in Lactobacillus delbrueckii subsp. bulgaricus (strain ATCC 11842 / DSM 20081 / BCRC 10696 / JCM 1002 / NBRC 13953 / NCIMB 11778 / NCTC 12712 / WDCM 00102 / Lb 14).